The chain runs to 91 residues: MNFFGIGLPEMLVILAIALLVFGPKKLPEIGRSLGKALRGFQDASREFESEIKREIDRTPATPAEATVEPPVLDSAPTEAVTVEKQTETQV.

Residues 3-23 form a helical membrane-spanning segment; that stretch reads FFGIGLPEMLVILAIALLVFG. The segment at 57-91 is disordered; sequence DRTPATPAEATVEPPVLDSAPTEAVTVEKQTETQV. Low complexity predominate over residues 59–72; the sequence is TPATPAEATVEPPV.

Belongs to the TatA/E family. As to quaternary structure, forms a complex with TatC.

Its subcellular location is the cell inner membrane. Functionally, part of the twin-arginine translocation (Tat) system that transports large folded proteins containing a characteristic twin-arginine motif in their signal peptide across membranes. TatA could form the protein-conducting channel of the Tat system. In Synechococcus elongatus (strain ATCC 33912 / PCC 7942 / FACHB-805) (Anacystis nidulans R2), this protein is Sec-independent protein translocase protein TatA.